Reading from the N-terminus, the 201-residue chain is Histidinol dehydrogenase (201 aa).

It belongs to the histidinol dehydrogenase family. Homodimer. Zn(2+) serves as cofactor.

It carries out the reaction L-histidinol + 2 NAD(+) + H2O = L-histidine + 2 NADH + 3 H(+). The protein operates within amino-acid biosynthesis; L-histidine biosynthesis; L-histidine from 5-phospho-alpha-D-ribose 1-diphosphate: step 9/9. Its function is as follows. Catalyzes the sequential NAD-dependent oxidations of L-histidinol to L-histidinaldehyde and then to L-histidine. The sequence is that of Histidinol dehydrogenase (hisD) from Buchnera aphidicola subsp. Melaphis rhois.